The chain runs to 591 residues: Aspartate--tRNA(Asp/Asn) ligase (591 aa).

Glu-174 lines the L-aspartate pocket. The tract at residues 198 to 201 (QLFK) is aspartate. Arg-220 is a binding site for L-aspartate. Residues 220 to 222 (RDE) and Gln-229 contribute to the ATP site. Residue His-450 coordinates L-aspartate. Glu-483 is a binding site for ATP. Arg-490 contacts L-aspartate. 535-538 (GLDR) is an ATP binding site.

It belongs to the class-II aminoacyl-tRNA synthetase family. Type 1 subfamily. Homodimer.

The protein localises to the cytoplasm. It carries out the reaction tRNA(Asx) + L-aspartate + ATP = L-aspartyl-tRNA(Asx) + AMP + diphosphate. Functionally, aspartyl-tRNA synthetase with relaxed tRNA specificity since it is able to aspartylate not only its cognate tRNA(Asp) but also tRNA(Asn). Reaction proceeds in two steps: L-aspartate is first activated by ATP to form Asp-AMP and then transferred to the acceptor end of tRNA(Asp/Asn). This Pseudomonas putida (strain W619) protein is Aspartate--tRNA(Asp/Asn) ligase.